Consider the following 387-residue polypeptide: Putative transmembrane protein At3g54730 (387 aa).

The span at 10-25 shows a compositional bias: pro residues; the sequence is PAPPLLLPSPNPPPCA. The disordered stretch occupies residues 10-45; the sequence is PAPPLLLPSPNPPPCALPQDLTSLVSPSEPPDPPDP. 8 helical membrane-spanning segments follow: residues 97–117, 128–148, 154–174, 186–206, 221–241, 292–312, 335–355, and 362–382; these read VFPL…HPLV, GSNF…ILQF, VMIS…MILL, VLFS…VGLI, IQKL…FLEI, SWCF…YPLE, FSTI…FIFF, and PFVA…LNHF.

The protein resides in the membrane. This is Putative transmembrane protein At3g54730 from Arabidopsis thaliana (Mouse-ear cress).